The chain runs to 174 residues: 2-hydroxy-palmitic acid dioxygenase MPO1 (174 aa).

Residues 1-23 (MGEGLLDLRSQLGFYKFYHHNPK) are Cytoplasmic-facing. Residues 24–44 (NVLIHSIFVPTILFSGSCMLH) traverse the membrane as a helical segment. Residues 45–63 (RVKIYQSISLTAVLSVLFS) are Lumenal-facing. A helical membrane pass occupies residues 64–84 (IFYCLLYLPTGLLAGVLLLLL). The Cytoplasmic segment spans residues 85–98 (NLALIDHRVDLTFK). A helical membrane pass occupies residues 99–119 (QELGLFTIGWIFQFVGHGVFE). Residues 120–131 (KRRPALIDNLVQ) are Lumenal-facing. Residues 132–152 (SLVLAPYFIMFEFLFKLGFMP) form a helical membrane-spanning segment. Residues 153–174 (RLKATLEHDLEIKQRNLRMQRQ) are Cytoplasmic-facing.

Belongs to the MPO1 family. Fe(2+) serves as cofactor.

It localises to the endoplasmic reticulum membrane. The catalysed reaction is (R)-2-hydroxyhexadecanoate + O2 = pentadecanoate + CO2 + H2O. In terms of biological role, dioxygenase that catalyzes the alpha-oxidation of 2-hydroxy fatty acids in an iron-dependent manner. Involved in metabolism of phytosphingosine and is required for proper endoplasmic reticulum stress response. In Saccharomyces cerevisiae (strain ATCC 204508 / S288c) (Baker's yeast), this protein is 2-hydroxy-palmitic acid dioxygenase MPO1.